We begin with the raw amino-acid sequence, 90 residues long: Putative membrane protein insertion efficiency factor (90 aa).

This sequence belongs to the UPF0161 family.

It localises to the cell membrane. Functionally, could be involved in insertion of integral membrane proteins into the membrane. This is Putative membrane protein insertion efficiency factor from Lactococcus lactis subsp. cremoris (strain MG1363).